Consider the following 451-residue polypeptide: Ubiquinone biosynthesis monooxygenase COQ6, mitochondrial (451 aa).

The protein belongs to the UbiH/COQ6 family. Component of a multi-subunit COQ enzyme complex. It depends on FAD as a cofactor.

Its subcellular location is the mitochondrion inner membrane. The enzyme catalyses a 4-hydroxy-3-(all-trans-polyprenyl)benzoate + 2 reduced [2Fe-2S]-[ferredoxin] + O2 + 2 H(+) = a 3,4-dihydroxy-5-(all-trans-polyprenyl)benzoate + 2 oxidized [2Fe-2S]-[ferredoxin] + H2O. The catalysed reaction is a 2-methoxy-6-(all-trans-polyprenyl)phenol + 2 reduced [2Fe-2S]-[ferredoxin] + O2 + 2 H(+) = a 2-methoxy-6-(all-trans-polyprenyl)benzene-1,4-diol + 2 oxidized [2Fe-2S]-[ferredoxin] + H2O. It participates in cofactor biosynthesis; ubiquinone biosynthesis. In terms of biological role, FAD-dependent monooxygenase required for two non-consecutive steps during ubiquinone biosynthesis. Required for the C5-ring hydroxylation during ubiquinone biosynthesis by catalyzing the hydroxylation of 4-hydroxy-3-(all-trans-polyprenyl)benzoic acid to 3,4-dihydroxy-5-(all-trans-polyprenyl)benzoic acid. Also acts downstream of coq4, for the C1-hydroxylation during ubiquinone biosynthesis by catalyzing the hydroxylation of 2-methoxy-6-(all-trans-polyprenyl)phenol to 2-methoxy-6-(all-trans-polyprenyl)benzene-1,4-diol. The electrons required for the hydroxylation reaction are funneled indirectly to coq-6 from NADPH via a ferredoxin/ferredoxin reductase system. The protein is Ubiquinone biosynthesis monooxygenase COQ6, mitochondrial of Caenorhabditis elegans.